A 525-amino-acid chain; its full sequence is cAMP-dependent protein kinase regulatory subunit (525 aa).

The dimerization and phosphorylation stretch occupies residues 28–213; it reads QFCANWFNSK…RIRGSIGNNL (186 aa). Disordered regions lie at residues 114 to 146 and 170 to 196; these read MDASQSPDSTPAPATPAAPAAPAAPAAPFSSLG and SVSAESMAPSAANAESDGSPLPKTVIP. Low complexity predominate over residues 124 to 146; sequence PAPATPAAPAAPAAPAAPFSSLG. S170 is modified (phosphoserine; by autocatalysis). A nucleoside 3',5'-cyclic phosphate contacts are provided by residues 214–345 and 348–472; these read LFRN…FLMD and LFER…TYGD. 3',5'-cyclic AMP is bound by residues E295, R304, and E417. The disordered stretch occupies residues 497-525; that stretch reads SGADTSFPHPMDSSAKPGEGAWSAPNPFA.

It belongs to the cAMP-dependent kinase regulatory chain family. Tetramer, composed of 2 regulatory (R) and 2 catalytic (C) subunits. In the presence of cAMP it dissociates into 2 active monomeric C subunits and an R dimer.

The protein is cAMP-dependent protein kinase regulatory subunit (PKAR) of Mycosarcoma maydis (Corn smut fungus).